The sequence spans 587 residues: 5-aminolevulinate synthase, erythroid-specific, mitochondrial (587 aa).

The transit peptide at 1–49 (MVTAAMLLQCCPVLARGPTSLLGKVVKTHQFLFGIGRCPILATQGPNCS) directs the protein to the mitochondrion. Position 163 (arginine 163) interacts with succinyl-CoA. Positions 258 and 259 each coordinate pyridoxal 5'-phosphate. Residues serine 280 and lysine 299 each contribute to the succinyl-CoA site. Residues serine 332, histidine 360, and threonine 388 each contribute to the pyridoxal 5'-phosphate site. The active site involves lysine 391. N6-(pyridoxal phosphate)lysine is present on lysine 391. Residues threonine 420 and threonine 421 each contribute to the pyridoxal 5'-phosphate site. Threonine 508 is a binding site for succinyl-CoA.

This sequence belongs to the class-II pyridoxal-phosphate-dependent aminotransferase family. As to quaternary structure, homodimer. Interacts with SUCLA2. In terms of assembly, interacts with SUCLA2. Pyridoxal 5'-phosphate is required as a cofactor. As to expression, erythroid-specific.

It is found in the mitochondrion inner membrane. It carries out the reaction succinyl-CoA + glycine + H(+) = 5-aminolevulinate + CO2 + CoA. Its pathway is porphyrin-containing compound metabolism; protoporphyrin-IX biosynthesis; 5-aminolevulinate from glycine: step 1/1. Down-regulated by itaconyl-CoA which acts as a competitive inhibitor of succinyl-CoA substrate. Catalyzes the pyridoxal 5'-phosphate (PLP)-dependent condensation of succinyl-CoA and glycine to form aminolevulinic acid (ALA), with CoA and CO2 as by-products. Contributes significantly to heme formation during erythropoiesis. In terms of biological role, catalyzes the pyridoxal 5'-phosphate (PLP)-dependent condensation of succinyl-CoA and glycine to form aminolevulinic acid (ALA), with CoA and CO2 as by-products. Catalytic activity is 75-85% of isoform 1 activity. Its function is as follows. Catalyzes the pyridoxal 5'-phosphate (PLP)-dependent condensation of succinyl-CoA and glycine to form aminolevulinic acid (ALA), with CoA and CO2 as by-products. Catalytic activity is 65-75% of isoform 1 activity. In Homo sapiens (Human), this protein is 5-aminolevulinate synthase, erythroid-specific, mitochondrial.